An 804-amino-acid chain; its full sequence is Chondroitin sulfate synthase mig-22 (804 aa).

Residues 1-6 (MVGGGR) lie on the Cytoplasmic side of the membrane. The helical; Signal-anchor for type II membrane protein transmembrane segment at 7 to 27 (TGIHLLLGFLIGAALALFFFS) threads the bilayer. The Lumenal portion of the chain corresponds to 28–804 (STPSIDLTSS…QLAKLLFHEK (777 aa)). 3 N-linked (GlcNAc...) asparagine glycosylation sites follow: N123, N172, and N268.

It belongs to the chondroitin N-acetylgalactosaminyltransferase family. Interacts with sqv-5. A divalent metal cation serves as cofactor. As to expression, expressed in seam cells, the vulval epithelium and in oocytes (at protein level).

It localises to the golgi apparatus. Its subcellular location is the golgi stack membrane. It carries out the reaction 3-O-(beta-D-GlcA-(1-&gt;3)-beta-D-GalNAc-(1-&gt;4)-beta-D-GlcA-(1-&gt;3)-beta-D-Gal-(1-&gt;3)-beta-D-Gal-(1-&gt;4)-beta-D-Xyl)-L-seryl-[protein] + UDP-N-acetyl-alpha-D-galactosamine = 3-O-(beta-D-GalNAc-(1-&gt;4)-beta-D-GlcA-(1-&gt;3)-beta-D-GalNAc-(1-&gt;4)-beta-D-GlcA-(1-&gt;3)-beta-D-Gal-(1-&gt;3)-beta-D-Gal-(1-&gt;4)-beta-D-Xyl)-L-seryl-[protein] + UDP + H(+). The catalysed reaction is 3-O-{beta-D-GlcA-(1-&gt;3)-[beta-D-GalNAc-(1-&gt;4)-beta-D-GlcA-(1-&gt;3)](n)-beta-D-GalNAc-(1-&gt;4)-beta-D-GlcA-(1-&gt;3)-beta-D-Gal-(1-&gt;3)-beta-D-Gal-(1-&gt;4)-beta-D-Xyl}-L-seryl-[protein] + UDP-N-acetyl-alpha-D-galactosamine = 3-O-{[beta-D-GalNAc-(1-&gt;4)-beta-D-GlcA-(1-&gt;3)](n+1)-beta-D-GalNAc-(1-&gt;4)-beta-D-GlcA-(1-&gt;3)-beta-D-Gal-(1-&gt;3)-beta-D-Gal-(1-&gt;4)-beta-D-Xyl}-L-seryl-[protein] + UDP + H(+). It catalyses the reaction 3-O-(beta-D-GalNAc-(1-&gt;4)-beta-D-GlcA-(1-&gt;3)-beta-D-Gal-(1-&gt;3)-beta-D-Gal-(1-&gt;4)-beta-D-Xyl)-L-seryl-[protein] + UDP-alpha-D-glucuronate = 3-O-(beta-D-GlcA-(1-&gt;3)-beta-D-GalNAc-(1-&gt;4)-beta-D-GlcA-(1-&gt;3)-beta-D-Gal-(1-&gt;3)-beta-D-Gal-(1-&gt;4)-beta-D-Xyl)-L-seryl-[protein] + UDP + H(+). The enzyme catalyses 3-O-{[beta-D-GalNAc-(1-&gt;4)-beta-D-GlcA-(1-&gt;3)](n)-beta-D-GalNAc-(1-&gt;4)-beta-D-GlcA-(1-&gt;3)-beta-D-Gal-(1-&gt;3)-beta-D-Gal-(1-&gt;4)-beta-D-Xyl}-L-seryl-[protein] + UDP-alpha-D-glucuronate = 3-O-{beta-D-GlcA-(1-&gt;3)-[beta-D-GalNAc-(1-&gt;4)-beta-D-GlcA-(1-&gt;3)](n)-beta-D-GalNAc-(1-&gt;4)-beta-D-GlcA-(1-&gt;3)-beta-D-Gal-(1-&gt;3)-beta-D-Gal-(1-&gt;4)-beta-D-Xyl}-L-seryl-[protein] + UDP + H(+). Functionally, has both beta-1,3-glucuronic acid and beta-1,4-N-acetylgalactosamine transferase activity. Transfers glucuronic acid (GlcUA) from UDP-GlcUA and N-acetylgalactosamine (GalNAc) from UDP-GalNAc to the non-reducing end of the elongating chondroitin polymer. Required together with sqv-5 for the biosynthesis of chondroitin. Chondroitin is involved in organogenesis of the vulva, maturation of the gonad, and neural development. May have a specific role in unc-6/netrin-mediated dorsal guidance of gonadal distal tip cells. Glycosyltransferase activity is weak. The chain is Chondroitin sulfate synthase mig-22 (mig-22) from Caenorhabditis elegans.